The chain runs to 125 residues: Cu-Zn superoxide dismutase-like protein OPG175 (125 aa).

Cysteines 52 and 102 form a disulfide.

It belongs to the Cu-Zn superoxide dismutase family.

It is found in the virion. The protein resides in the host cytoplasm. Its function is as follows. Superoxide dismutase-like protein with no enzymatic activity. This chain is Cu-Zn superoxide dismutase-like protein OPG175 (OPG175), found in Vaccinia virus (strain Western Reserve) (VACV).